Here is a 308-residue protein sequence, read N- to C-terminus: Ribosome maturation factor RimP (308 aa).

Disordered stretches follow at residues Met1–Ala31, Glu94–Gly113, and Asp249–Arg308. Over residues Ala17–Ala31 the composition is skewed to low complexity. Gly residues predominate over residues Asp99–Gly113. Over residues Asp249 to Tyr269 the composition is skewed to acidic residues.

It belongs to the RimP family.

Its subcellular location is the cytoplasm. Functionally, required for maturation of 30S ribosomal subunits. This Parafrankia sp. (strain EAN1pec) protein is Ribosome maturation factor RimP.